The following is a 567-amino-acid chain: Geranylgeranyl transferase type-2 subunit alpha (567 aa).

6 PFTA repeats span residues 44 to 78 (LDESVLELTSQILGANPDFATLWNCRREVLQQLET), 88 to 122 (LVKAELGFLESCLRVNPKSYGTWHHRCWLLSRLPE), 124 to 158 (NWARELELCARFLEADERNFHCWDYRRFVAAQAAV), 159 to 193 (APAEELAFTDSLITRNFSNYSSWHYRSCLLPQLHP), 207 to 241 (VLLRELELVQNAFFTDPNDQSAWFYHRWLLGRAEP), and 363 to 397 (VLQSELESCKELQELEPENKWCLLTIILLMRALDP). Serine 98 is subject to Phosphoserine. LRR repeat units follow at residues 442 to 463 (DVRVLHLAHKDLTVLCHLEQLL), 464 to 486 (LVTHLDLSHNRLRALPPALAALR), 487 to 508 (CLEVLQASDNVLENLDGVANLP), 509 to 530 (RLRELLLCNNRLQQSAALQTLA), and 534 to 555 (RLVFLNLQGNSLCQEEGIRERL).

The protein belongs to the protein prenyltransferase subunit alpha family. As to quaternary structure, heterotrimer composed of RABGGTA, RABGGTB and CHM; within this trimer, RABGGTA and RABGGTB form the catalytic component B, while CHM (component A) mediates peptide substrate binding. The Rab GGTase dimer (RGGT) interacts with CHM (component A) prior to Rab protein binding; the association is stabilized by geranylgeranyl pyrophosphate (GGpp). The CHM:RGGT:Rab complex is destabilized by GGpp. Interacts with non-phosphorylated form of RAB8A; phosphorylation of RAB8A at 'Thr-72' disrupts this interaction.

It carries out the reaction geranylgeranyl diphosphate + L-cysteinyl-[protein] = S-geranylgeranyl-L-cysteinyl-[protein] + diphosphate. With respect to regulation, the enzymatic reaction requires the aid of a Rab escort protein (also called component A), such as CHM. Catalyzes the transfer of a geranylgeranyl moiety from geranylgeranyl diphosphate to both cysteines of Rab proteins with the C-terminal sequence -XXCC, -XCXC and -CCXX, such as RAB1A, RAB3A, RAB5A and RAB7A. In Mus musculus (Mouse), this protein is Geranylgeranyl transferase type-2 subunit alpha (Rabggta).